The sequence spans 137 residues: Large ribosomal subunit protein uL16 (137 aa).

This sequence belongs to the universal ribosomal protein uL16 family. In terms of assembly, part of the 50S ribosomal subunit.

In terms of biological role, binds 23S rRNA and is also seen to make contacts with the A and possibly P site tRNAs. This chain is Large ribosomal subunit protein uL16, found in Streptococcus uberis (strain ATCC BAA-854 / 0140J).